The sequence spans 2542 residues: Probable polyketide synthase 41 (2542 aa).

Positions 11–441 (CNKVAIIGIG…GSNCCLIVSS (431 aa)) constitute a Ketosynthase family 3 (KS3) domain. Catalysis depends on for beta-ketoacyl synthase activity residues Cys-177, His-318, and His-360. The acyl/malonyl transferase stretch occupies residues 628-661 (GIKPSIIVGHSLGEISSSYCSGMIDLDTFCYLIY). The active-site For acyl/malonyl transferase activity is the Ser-638. The tract at residues 926–1059 (INHLGISNSN…ANFQLFSRGP (134 aa)) is N-terminal hotdog fold. The region spanning 926–1231 (INHLGISNSN…FKSTTKIKDP (306 aa)) is the PKS/mFAS DH domain. The Proton acceptor; for dehydratase activity role is filled by His-959. The interval 1083–1231 (NLTKLSKQEL…FKSTTKIKDP (149 aa)) is C-terminal hotdog fold. Asp-1145 functions as the Proton donor; for dehydratase activity in the catalytic mechanism. Residues 2459–2537 (NVELTVDQLI…SFIQLVKNSM (79 aa)) form the Carrier domain. Ser-2496 carries the post-translational modification O-(pantetheine 4'-phosphoryl)serine.

It depends on pantetheine 4'-phosphate as a cofactor.

In terms of biological role, probable polyketide synthase. This Dictyostelium discoideum (Social amoeba) protein is Probable polyketide synthase 41 (pks41).